An 85-amino-acid chain; its full sequence is MVKLSTIVVFCLTFFVSIYQNYISFFMPSNCRFYPTCSTYMILSLRKFGVIKGIILTILRLFKCHPLHQGGEDLVPLKIKDKSEY.

It belongs to the UPF0161 family.

The protein localises to the cell membrane. Functionally, could be involved in insertion of integral membrane proteins into the membrane. The chain is Putative membrane protein insertion efficiency factor from Buchnera aphidicola subsp. Schizaphis graminum (strain Sg).